The sequence spans 111 residues: Translation initiation factor 1A 1 (111 aa).

Residues 1-28 are disordered; it reads MTLADLKKPTSRASPSTEETVTRVRTPR. Residues 22 to 96 form the S1-like domain; that stretch reads TRVRTPRREN…EKADVIWKYT (75 aa).

Belongs to the eIF-1A family.

Seems to be required for maximal rate of protein biosynthesis. Enhances ribosome dissociation into subunits and stabilizes the binding of the initiator Met-tRNA(I) to 40 S ribosomal subunits. This chain is Translation initiation factor 1A 1 (eIF1A1), found in Methanosarcina mazei (strain ATCC BAA-159 / DSM 3647 / Goe1 / Go1 / JCM 11833 / OCM 88) (Methanosarcina frisia).